The following is a 70-amino-acid chain: Large ribosomal subunit protein eL38 (70 aa).

This sequence belongs to the eukaryotic ribosomal protein eL38 family.

This Lonomia obliqua (Moth) protein is Large ribosomal subunit protein eL38 (RpL38).